We begin with the raw amino-acid sequence, 508 residues long: Aspartic proteinase A3 (508 aa).

The signal sequence occupies residues 1 to 25 (MGTRFQSFLLVFLLSCLILISTASC). Positions 26–69 (ERNGDGTIRIGLKKRKLDRSNRLASQLFLKNRGSHWSPKHYFRL) are cleaved as a propeptide — activation peptide. Positions 87–505 (YYGDITIGTP…DYGKGRVGFA (419 aa)) constitute a Peptidase A1 domain. Residue D105 is part of the active site. Disulfide bonds link C118/C124 and C283/C287. D292 is a catalytic residue. Residues 317-419 (IVSRECKAVV…AELCDHIPTQ (103 aa)) form the Saposin B-type domain. Disulfide bonds link C322–C413, C347–C385, C353–C382, and C427–C464. N399 carries N-linked (GlcNAc...) asparagine glycosylation.

This sequence belongs to the peptidase A1 family. In terms of tissue distribution, expressed in petals, carpels and seed pods.

The protein localises to the secreted. Involved in the processing and degradation of storage proteins. This Arabidopsis thaliana (Mouse-ear cress) protein is Aspartic proteinase A3 (APA3).